A 500-amino-acid polypeptide reads, in one-letter code: Serine/threonine protein phosphatase 2A 57 kDa regulatory subunit B' kappa isoform (500 aa).

The segment at 1-53 (MFKQFLSKLPRKSSKSDSGELNRSSSGPVSSPVQRSGTSGGGSGPVRSNSGKR) is disordered. The segment covering 21-37 (LNRSSSGPVSSPVQRSG) has biased composition (polar residues).

This sequence belongs to the phosphatase 2A regulatory subunit B56 family. As to quaternary structure, PP2A consists of a common heteromeric enzyme, composed of a catalytic subunit (subunits C), a constant regulatory subunit (subunit A), and a variety of regulatory subunits such as subunits B (the R2/B/PR55/B55, R3/B''/PR72/PR130/PR59 and R5/B'/B56 families).

The protein resides in the cytoplasm. Functionally, the B regulatory subunit may modulate substrate selectivity and catalytic activity, and may also direct the localization of the catalytic enzyme to a particular subcellular compartment. This is Serine/threonine protein phosphatase 2A 57 kDa regulatory subunit B' kappa isoform (B'KAPPA) from Arabidopsis thaliana (Mouse-ear cress).